Reading from the N-terminus, the 457-residue chain is Multidrug resistance protein MdtK (457 aa).

Helical transmembrane passes span 11 to 31, 46 to 66, 93 to 113, 127 to 147, 160 to 180, 188 to 208, 243 to 263, 283 to 301, 316 to 336, 357 to 377, 387 to 407, and 418 to 438; these read LLAL…MGVV, AVAV…GLLL, WLAL…DHVI, AVGF…FQVL, GMVI…IFIY, LGGV…FLMM, LPVA…ALLV, LMFM…RVGF, YTSM…TIVF, LMLL…GSGV, IFFI…YLLG, and PAGF…LMVL.

Belongs to the multi antimicrobial extrusion (MATE) (TC 2.A.66.1) family. MdtK subfamily.

It localises to the cell inner membrane. Multidrug efflux pump that functions probably as a Na(+)/drug antiporter. The chain is Multidrug resistance protein MdtK from Yersinia pseudotuberculosis serotype IB (strain PB1/+).